The following is a 470-amino-acid chain: MESIVYETQPLLRGMVVGTIMLLCYRYGLALSILQLYLNFMYRITNEKGKPLRGPEFSWPDGQTVEKFLQGGQKSFSWQAYGPLYRIWTVFRPEVVITRPEDVKAFFFDSHTHQKAASSNAGWLFSQILGDCLGLINGERWSRVRHAFDPFFTRKISAQRLPHIMAAGEGYVNEVHQYDLGGKQAASTINLNAVDAFQRFPFFYVAEIIYGPLGITERVELWKLAETHTNIFRRLVQGGIHRYKATKFLSTSAYKETAHFVAAWRQFTLELAQKQLREGRTSPLTDLMAEVEDGKVTLNEVLHTIDESLFANLDVTTHVLTWAIVLLGNHPDVQELVRSEIKANTNDLETYMNRKDTLLHYSLLESLRVRPLLAFTIPESAQEDKVLSGYRVPKNIRYNLSTFGFGPRKCLGQHMAENMIKAILVPLLRQFRFKLLADQYKNGEYKVDKTNWVTLSDVNLEMERVPSGGS.

Residues 12–34 (LRGMVVGTIMLLCYRYGLALSIL) form a helical membrane-spanning segment. N-linked (GlcNAc...) asparagine glycosylation is present at N399. C410 provides a ligand contact to heme.

This sequence belongs to the cytochrome P450 family. Heme serves as cofactor.

It localises to the membrane. The protein operates within mycotoxin biosynthesis. Cytochrome P450 monooxygenase; part of the gene cluster that mediates the biosynthesis of sirodesmin PL, an epipolythiodioxopiperazine (ETP) characterized by a disulfide bridged cyclic dipeptide and that acts as a phytotoxin which is involved in the blackleg didease of canola. SirD catalyzes the O-prenylation of L-tyrosine (L-Tyr) in the presence of dimethylallyl diphosphate (DMAPP) to yield 4-O-dimethylallyl-L-Tyr, and therefore represents probably the first pathway-specific enzyme in the biosynthesis of sirodesmin PL. 4-O-dimethylallyl-L-Tyr, then undergoes condensation with L-Ser in a reaction catalyzed by the non-ribosomal peptide synthase sirP to form the diketopiperazine (DKP) backbone. Further bishydroxylation of the DKP performed by the cytochrome P450 monooxygenase sirC leads to the production of the intermediate phomamide. This step is essential to form the reactive thiol group required for toxicity of sirodesmin PL. The next steps of sirodesmin biosynthesis are not well understood yet, but some predictions could be made from intermediate compounds identification. Phomamide is converted into phomalizarine via oxidation, probably by sirT. Further oxidation, methylation (by sirM or sirN) and reduction steps convert phomalizarine to deacetyl sirodesmin. Finally, acetyltransferase sirH probably acetylates deacetyl sirodesmin to produce sirodesmin PL. The protein is Cytochrome P450 monooxygenase sirC of Leptosphaeria maculans (Blackleg fungus).